A 296-amino-acid polypeptide reads, in one-letter code: Acetylglutamate kinase (296 aa).

Substrate is bound by residues 69-70 (GG), arginine 91, and asparagine 193.

It belongs to the acetylglutamate kinase family. ArgB subfamily.

It localises to the cytoplasm. It carries out the reaction N-acetyl-L-glutamate + ATP = N-acetyl-L-glutamyl 5-phosphate + ADP. It participates in amino-acid biosynthesis; L-arginine biosynthesis; N(2)-acetyl-L-ornithine from L-glutamate: step 2/4. In terms of biological role, catalyzes the ATP-dependent phosphorylation of N-acetyl-L-glutamate. The polypeptide is Acetylglutamate kinase (Delftia acidovorans (strain DSM 14801 / SPH-1)).